A 347-amino-acid chain; its full sequence is Transcription factor JunB (347 aa).

Glycyl lysine isopeptide (Lys-Gly) (interchain with G-Cter in SUMO2) cross-links involve residues K4, K33, and K36. The disordered stretch occupies residues 50–77; the sequence is LKAPGARGPGPEGNGGGSYFSSQGSDTG. Residues 56-67 show a composition bias toward gly residues; sequence RGPGPEGNGGGS. Residues 68–77 show a composition bias toward polar residues; sequence YFSSQGSDTG. K81 is covalently cross-linked (Glycyl lysine isopeptide (Lys-Gly) (interchain with G-Cter in SUMO2)). Phosphothreonine occurs at positions 102 and 104. S117 is subject to Phosphoserine. A Glycyl lysine isopeptide (Lys-Gly) (interchain with G-Cter in SUMO2) cross-link involves residue K141. At K240 the chain carries N6-acetyllysine; alternate. K240 participates in a covalent cross-link: Glycyl lysine isopeptide (Lys-Gly) (interchain with G-Cter in SUMO1); alternate. K240 participates in a covalent cross-link: Glycyl lysine isopeptide (Lys-Gly) (interchain with G-Cter in SUMO2); alternate. Residues 241–253 are compositionally biased toward basic and acidic residues; that stretch reads EEPQTVPEARSRD. The segment at 241 to 260 is disordered; the sequence is EEPQTVPEARSRDATPPVSP. Phosphoserine is present on S251. T255 is subject to Phosphothreonine. S259 is subject to Phosphoserine. A basic motif region spans residues 268–295; sequence RIKVERKRLRNRLAATKCRKRKLERIAR. In terms of domain architecture, bZIP spans 268-331; sequence RIKVERKRLR…AQLKQKVMTH (64 aa). The leucine-zipper stretch occupies residues 296–324; the sequence is LEDKVKTLKAENAGLSSTAGLLREQVAQL. Residue K343 forms a Glycyl lysine isopeptide (Lys-Gly) (interchain with G-Cter in SUMO2) linkage.

The protein belongs to the bZIP family. Jun subfamily. As to quaternary structure, binds DNA as a homodimer or as a heterodimer with another member of the Jun/Fos family. Component of an AP-1 transcription factor complex composed of JUN-FOS heterodimers. As part of the AP-1 transcription factor complex, forms heterodimers with FOSB, thereby binding to the AP-1 consensus sequence and stimulating transcription. Interacts with ITCH (via its WW domains). Ubiquitinated by ITCH, leading to its degradation.

The protein localises to the nucleus. Its function is as follows. Transcription factor involved in regulating gene activity following the primary growth factor response. Binds to the DNA sequence 5'-TGA[GC]TCA-3'. Heterodimerizes with proteins of the FOS family to form an AP-1 transcription complex, thereby enhancing its DNA binding activity to an AP-1 consensus sequence and its transcriptional activity. This Bos taurus (Bovine) protein is Transcription factor JunB (JUNB).